A 716-amino-acid chain; its full sequence is Translation initiation factor IF-2 (716 aa).

The segment at 50 to 137 (FKKSAKPAGN…KPKKELPEKI (88 aa)) is disordered. The segment covering 92-101 (NNVQNTQFNN) has biased composition (low complexity). A compositionally biased stretch (basic residues) spans 102–118 (KNKKKNNNNKKNKRGKN). The segment covering 125–137 (KQFKPKKELPEKI) has biased composition (basic and acidic residues). A tr-type G domain is found at 217–386 (IRPPVVTIMG…LLVSEVEELK (170 aa)). The interval 226 to 233 (GHVDHGKT) is G1. 226–233 (GHVDHGKT) is a binding site for GTP. The segment at 251-255 (GITQH) is G2. Positions 272 to 275 (DTPG) are G3. GTP-binding positions include 272–276 (DTPGH) and 326–329 (NKID). The segment at 326-329 (NKID) is G4. The tract at residues 362-364 (SAL) is G5.

It belongs to the TRAFAC class translation factor GTPase superfamily. Classic translation factor GTPase family. IF-2 subfamily.

It localises to the cytoplasm. Its function is as follows. One of the essential components for the initiation of protein synthesis. Protects formylmethionyl-tRNA from spontaneous hydrolysis and promotes its binding to the 30S ribosomal subunits. Also involved in the hydrolysis of GTP during the formation of the 70S ribosomal complex. This chain is Translation initiation factor IF-2, found in Bacillus licheniformis (strain ATCC 14580 / DSM 13 / JCM 2505 / CCUG 7422 / NBRC 12200 / NCIMB 9375 / NCTC 10341 / NRRL NRS-1264 / Gibson 46).